Here is a 55-residue protein sequence, read N- to C-terminus: Large ribosomal subunit protein bL33 (55 aa).

This sequence belongs to the bacterial ribosomal protein bL33 family.

The polypeptide is Large ribosomal subunit protein bL33 (Ruegeria sp. (strain TM1040) (Silicibacter sp.)).